The chain runs to 232 residues: Phosphatidylserine decarboxylase proenzyme (232 aa).

The Schiff-base intermediate with substrate; via pyruvic acid role is filled by S190. A Pyruvic acid (Ser); by autocatalysis modification is found at S190.

This sequence belongs to the phosphatidylserine decarboxylase family. PSD-A subfamily. As to quaternary structure, heterodimer of a large membrane-associated beta subunit and a small pyruvoyl-containing alpha subunit. Pyruvate serves as cofactor. Is synthesized initially as an inactive proenzyme. Formation of the active enzyme involves a self-maturation process in which the active site pyruvoyl group is generated from an internal serine residue via an autocatalytic post-translational modification. Two non-identical subunits are generated from the proenzyme in this reaction, and the pyruvate is formed at the N-terminus of the alpha chain, which is derived from the carboxyl end of the proenzyme. The post-translation cleavage follows an unusual pathway, termed non-hydrolytic serinolysis, in which the side chain hydroxyl group of the serine supplies its oxygen atom to form the C-terminus of the beta chain, while the remainder of the serine residue undergoes an oxidative deamination to produce ammonia and the pyruvoyl prosthetic group on the alpha chain.

The protein resides in the cell membrane. The catalysed reaction is a 1,2-diacyl-sn-glycero-3-phospho-L-serine + H(+) = a 1,2-diacyl-sn-glycero-3-phosphoethanolamine + CO2. It functions in the pathway phospholipid metabolism; phosphatidylethanolamine biosynthesis; phosphatidylethanolamine from CDP-diacylglycerol: step 2/2. Its function is as follows. Catalyzes the formation of phosphatidylethanolamine (PtdEtn) from phosphatidylserine (PtdSer). In Rhizobium rhizogenes (strain K84 / ATCC BAA-868) (Agrobacterium radiobacter), this protein is Phosphatidylserine decarboxylase proenzyme.